The primary structure comprises 275 residues: Ribosomal RNA small subunit methyltransferase A (275 aa).

S-adenosyl-L-methionine-binding residues include Asn21, Leu23, Gly48, Glu69, Asp94, and Asn115.

It belongs to the class I-like SAM-binding methyltransferase superfamily. rRNA adenine N(6)-methyltransferase family. RsmA subfamily.

It is found in the cytoplasm. The enzyme catalyses adenosine(1518)/adenosine(1519) in 16S rRNA + 4 S-adenosyl-L-methionine = N(6)-dimethyladenosine(1518)/N(6)-dimethyladenosine(1519) in 16S rRNA + 4 S-adenosyl-L-homocysteine + 4 H(+). In terms of biological role, specifically dimethylates two adjacent adenosines (A1518 and A1519) in the loop of a conserved hairpin near the 3'-end of 16S rRNA in the 30S particle. May play a critical role in biogenesis of 30S subunits. This is Ribosomal RNA small subunit methyltransferase A from Clostridium botulinum (strain Langeland / NCTC 10281 / Type F).